The chain runs to 403 residues: SH3 and cysteine-rich domain-containing protein (403 aa).

Residues 1–51 (MIPPSGAREDSGDGLTGEATGTEQPPSPASTSSLESKLQKLKRSLSFKTKS) are disordered. Residues 19–36 (ATGTEQPPSPASTSSLES) show a composition bias toward polar residues. Basic residues predominate over residues 39–51 (QKLKRSLSFKTKS). Residues 108–160 (LHAFQEHVFKKPTFCDVCNHMIVGTHAKHGLRCGACKMSIHHKCADGLAPQRC) form a Phorbol-ester/DAG-type zinc finger. Residues 212–264 (QRTKKGGSGSGSDSPPRTSTSELVDVPEEADGPGDGSDMRTRSNSVFTYPENG) form a disordered region. The segment covering 222–232 (GSDSPPRTSTS) has biased composition (low complexity). SH3 domains follow at residues 286–345 (LQMN…RVEE) and 348–403 (KIYR…LVDV).

As to quaternary structure, interacts (via SH3 domains) with CACNA1S. Interacts with CACNA1H. Interacts with CACNA1C. Expressed predominantly in brain Detected in brain neurons, more specifically in hippocampus, cerebellum and inferior olive. Highly expressed in urinary bladder, and detected at lower levels in adrenal gland. Detected at very low levels in heart, liver, lung and kidney.

Its subcellular location is the cytoplasm. The protein localises to the cytosol. It is found in the cell membrane. It localises to the sarcolemma. In terms of biological role, promotes expression of the ion channel CACNA1H at the cell membrane, and thereby contributes to the regulation of channel activity. Plays a minor and redundant role in promoting the expression of calcium channel CACNA1S at the cell membrane, and thereby contributes to increased channel activity. Slows the rate of calcium-mediated inactivation of CACNA1C calcium channel activity. The chain is SH3 and cysteine-rich domain-containing protein from Mus musculus (Mouse).